The primary structure comprises 233 residues: Large ribosomal subunit protein uL1 (233 aa).

It belongs to the universal ribosomal protein uL1 family. Part of the 50S ribosomal subunit.

In terms of biological role, binds directly to 23S rRNA. The L1 stalk is quite mobile in the ribosome, and is involved in E site tRNA release. Its function is as follows. Protein L1 is also a translational repressor protein, it controls the translation of the L11 operon by binding to its mRNA. The chain is Large ribosomal subunit protein uL1 from Vibrio campbellii (strain ATCC BAA-1116).